A 157-amino-acid polypeptide reads, in one-letter code: Chromophore lyase CpcS/CpeS 1 (157 aa).

It belongs to the CpcS/CpeS biliprotein lyase family.

The protein resides in the plastid. It is found in the organellar chromatophore. Its function is as follows. Covalently attaches a chromophore to Cys residue(s) of phycobiliproteins. The sequence is that of Chromophore lyase CpcS/CpeS 1 from Paulinella chromatophora.